The sequence spans 134 residues: Arginine decarboxylase proenzyme (134 aa).

The active-site Schiff-base intermediate with substrate; via pyruvic acid is the serine 82. Residue serine 82 is modified to Pyruvic acid (Ser); by autocatalysis. The active-site Proton acceptor; for processing activity is histidine 87. Residue cysteine 102 is the Proton donor; for catalytic activity of the active site.

The protein belongs to the prokaryotic AdoMetDC family. Type 1 subfamily. Heterooctamer of four alpha and four beta chains arranged as a tetramer of alpha/beta heterodimers. It depends on pyruvate as a cofactor. In terms of processing, is synthesized initially as an inactive proenzyme. Formation of the active enzyme involves a self-maturation process in which the active site pyruvoyl group is generated from an internal serine residue via an autocatalytic post-translational modification. Two non-identical subunits are generated from the proenzyme in this reaction, and the pyruvate is formed at the N-terminus of the alpha chain, which is derived from the carboxyl end of the proenzyme. The post-translation cleavage follows an unusual pathway, termed non-hydrolytic serinolysis, in which the side chain hydroxyl group of the serine supplies its oxygen atom to form the C-terminus of the beta chain, while the remainder of the serine residue undergoes an oxidative deamination to produce ammonia and the pyruvoyl group blocking the N-terminus of the alpha chain.

The catalysed reaction is L-arginine + H(+) = agmatine + CO2. The protein operates within amine and polyamine biosynthesis; agmatine biosynthesis; agmatine from L-arginine: step 1/1. Its function is as follows. Specifically catalyzes the decarboxylation of L-arginine to agmatine. Has no S-adenosylmethionine decarboxylase (AdoMetDC) activity. In Caldivirga maquilingensis (strain ATCC 700844 / DSM 13496 / JCM 10307 / IC-167), this protein is Arginine decarboxylase proenzyme.